We begin with the raw amino-acid sequence, 71 residues long: Small ribosomal subunit protein bS18 (71 aa).

It belongs to the bacterial ribosomal protein bS18 family. In terms of assembly, part of the 30S ribosomal subunit. Forms a tight heterodimer with protein bS6.

Functionally, binds as a heterodimer with protein bS6 to the central domain of the 16S rRNA, where it helps stabilize the platform of the 30S subunit. This is Small ribosomal subunit protein bS18 from Synechococcus elongatus (strain ATCC 33912 / PCC 7942 / FACHB-805) (Anacystis nidulans R2).